The following is a 43-amino-acid chain: Protein PsbN (43 aa).

The helical transmembrane segment at 5–27 threads the bilayer; the sequence is NLVAIFVSCLLVSLTGYALYTSF.

It belongs to the PsbN family.

It localises to the plastid. It is found in the chloroplast thylakoid membrane. Its function is as follows. May play a role in photosystem I and II biogenesis. This Ephedra sinica (Chinese ephedra) protein is Protein PsbN.